The following is a 237-amino-acid chain: tRNA(His) guanylyltransferase (237 aa).

Mg(2+) contacts are provided by Asp-29, Gly-30, and Asp-77. GTP-binding positions include 29–34 (DGKHFH) and 76–77 (SD).

Belongs to the tRNA(His) guanylyltransferase family. Requires Mg(2+) as cofactor.

It carries out the reaction a 5'-end ribonucleotide-tRNA(His) + GTP + ATP + H2O = a 5'-end phospho-guanosine-ribonucleotide-tRNA(His) + AMP + 2 diphosphate + H(+). In terms of biological role, adds a GMP to the 5'-end of tRNA(His) after transcription and RNase P cleavage. The protein is tRNA(His) guanylyltransferase (THG1) of Eremothecium gossypii (strain ATCC 10895 / CBS 109.51 / FGSC 9923 / NRRL Y-1056) (Yeast).